The sequence spans 171 residues: UPF0316 protein Exig_2248 (171 aa).

The next 3 membrane-spanning stretches (helical) occupy residues 4 to 24 (ILLILLLQLIYVPVLTLRTIM), 31 to 51 (IIAGVLGTVETLIYIFALGIV), and 57 to 77 (TVGMIVYALGFGLGILIGGFV).

This sequence belongs to the UPF0316 family.

It is found in the cell membrane. The protein is UPF0316 protein Exig_2248 of Exiguobacterium sibiricum (strain DSM 17290 / CCUG 55495 / CIP 109462 / JCM 13490 / 255-15).